The chain runs to 439 residues: Adenylosuccinate synthetase (439 aa).

GTP contacts are provided by residues 25–31, 53–55, and Lys-62; these read GDEGKGK and GHT. Asp-26 acts as the Proton acceptor in catalysis. Asp-26 and Gly-53 together coordinate Mg(2+). Residues 26-29 and 51-54 contribute to the IMP site; these read DEGK and NAGH. His-54 serves as the catalytic Proton donor. 4 residues coordinate IMP: Thr-141, Arg-155, Asn-232, and Thr-247. Thr-307 lines the GTP pocket. 307 to 313 contacts substrate; that stretch reads TTTNRPR. An IMP-binding site is contributed by Arg-311. GTP is bound by residues Arg-313, 339–341, and 425–427; these read KLD and GVG.

Belongs to the adenylosuccinate synthetase family. Homodimer. Requires Mg(2+) as cofactor.

The protein localises to the cytoplasm. The catalysed reaction is IMP + L-aspartate + GTP = N(6)-(1,2-dicarboxyethyl)-AMP + GDP + phosphate + 2 H(+). Its pathway is purine metabolism; AMP biosynthesis via de novo pathway; AMP from IMP: step 1/2. Functionally, plays an important role in the salvage pathway for purine nucleotide biosynthesis. Catalyzes the first committed step in the biosynthesis of AMP from IMP. The chain is Adenylosuccinate synthetase from Plasmodium yoelii yoelii.